A 952-amino-acid chain; its full sequence is 2-oxoglutarate dehydrogenase E1 component (952 aa).

Belongs to the alpha-ketoglutarate dehydrogenase family. Homodimer. Part of the 2-oxoglutarate dehydrogenase (OGDH) complex composed of E1 (2-oxoglutarate dehydrogenase), E2 (dihydrolipoamide succinyltransferase) and E3 (dihydrolipoamide dehydrogenase); the complex contains multiple copies of the three enzymatic components (E1, E2 and E3). Requires thiamine diphosphate as cofactor.

The catalysed reaction is N(6)-[(R)-lipoyl]-L-lysyl-[protein] + 2-oxoglutarate + H(+) = N(6)-[(R)-S(8)-succinyldihydrolipoyl]-L-lysyl-[protein] + CO2. In terms of biological role, E1 component of the 2-oxoglutarate dehydrogenase (OGDH) complex which catalyzes the decarboxylation of 2-oxoglutarate, the first step in the conversion of 2-oxoglutarate to succinyl-CoA and CO(2). The chain is 2-oxoglutarate dehydrogenase E1 component from Geobacillus sp. (strain WCH70).